Here is a 414-residue protein sequence, read N- to C-terminus: Ornithine aminotransferase (414 aa).

A disulfide bridge links Cys154 with Cys163. The residue at position 262 (Lys262) is an N6-(pyridoxal phosphate)lysine.

It belongs to the class-III pyridoxal-phosphate-dependent aminotransferase family. As to quaternary structure, homodimer. Requires pyridoxal 5'-phosphate as cofactor. In terms of processing, the disulfide bond between Cys-154 and Cys-163 is reduced by TRX1 which increases OAT catalytic activity.

It localises to the cytoplasm. The catalysed reaction is a 2-oxocarboxylate + L-ornithine = L-glutamate 5-semialdehyde + an L-alpha-amino acid. It catalyses the reaction L-ornithine + 2-oxoglutarate = L-glutamate 5-semialdehyde + L-glutamate. Its pathway is amino-acid biosynthesis; L-proline biosynthesis; L-glutamate 5-semialdehyde from L-ornithine: step 1/1. Unlike for mammalian OATs, activity is increased by TRX1-mediated reduction of the disulfide bond between Cys-154 and Cys-163. Binding to TRX1 may also induce conformational changes that facilitate substrate binding. The enzyme has a very narrow substrate specificity and can only catalyze the transamination of alpha-ketoglutarate with ornithine or N-acetylornithine and, to a lesser extent, of glutamate-5-semialdehyde with glutamate and alanine. The polypeptide is Ornithine aminotransferase (Plasmodium falciparum (isolate 3D7)).